The primary structure comprises 256 residues: Thiazole synthase (256 aa).

Catalysis depends on lysine 98, which acts as the Schiff-base intermediate with DXP. Residues glycine 159, 185–186 (AG), and 207–208 (NT) contribute to the 1-deoxy-D-xylulose 5-phosphate site.

This sequence belongs to the ThiG family. In terms of assembly, homotetramer. Forms heterodimers with either ThiH or ThiS.

It is found in the cytoplasm. It carries out the reaction [ThiS sulfur-carrier protein]-C-terminal-Gly-aminoethanethioate + 2-iminoacetate + 1-deoxy-D-xylulose 5-phosphate = [ThiS sulfur-carrier protein]-C-terminal Gly-Gly + 2-[(2R,5Z)-2-carboxy-4-methylthiazol-5(2H)-ylidene]ethyl phosphate + 2 H2O + H(+). It participates in cofactor biosynthesis; thiamine diphosphate biosynthesis. Catalyzes the rearrangement of 1-deoxy-D-xylulose 5-phosphate (DXP) to produce the thiazole phosphate moiety of thiamine. Sulfur is provided by the thiocarboxylate moiety of the carrier protein ThiS. In vitro, sulfur can be provided by H(2)S. The polypeptide is Thiazole synthase (Aliivibrio salmonicida (strain LFI1238) (Vibrio salmonicida (strain LFI1238))).